A 430-amino-acid chain; its full sequence is Adenylosuccinate synthetase (430 aa).

GTP contacts are provided by residues 12-18 and 40-42; these read GDEGKGK and GHT. The active-site Proton acceptor is Asp-13. Mg(2+)-binding residues include Asp-13 and Gly-40. Residues 13–16, 38–41, Thr-130, Arg-144, Gln-225, Thr-240, and Arg-304 each bind IMP; these read DEGK and NAGH. The Proton donor role is filled by His-41. 300-306 contributes to the substrate binding site; the sequence is ATTGRPR. GTP-binding positions include Arg-306, 332 to 334, and 414 to 416; these read KLD and SIG.

Belongs to the adenylosuccinate synthetase family. Homodimer. Mg(2+) serves as cofactor.

The protein resides in the cytoplasm. The enzyme catalyses IMP + L-aspartate + GTP = N(6)-(1,2-dicarboxyethyl)-AMP + GDP + phosphate + 2 H(+). Its pathway is purine metabolism; AMP biosynthesis via de novo pathway; AMP from IMP: step 1/2. Plays an important role in the de novo pathway of purine nucleotide biosynthesis. Catalyzes the first committed step in the biosynthesis of AMP from IMP. In Geobacter metallireducens (strain ATCC 53774 / DSM 7210 / GS-15), this protein is Adenylosuccinate synthetase.